The following is a 208-amino-acid chain: Guanylate kinase (208 aa).

The region spanning 4–185 is the Guanylate kinase-like domain; the sequence is GNLYIISAPS…ALVDLEHILR (182 aa). 11–18 is a binding site for ATP; that stretch reads APSGAGKS.

This sequence belongs to the guanylate kinase family.

It localises to the cytoplasm. It carries out the reaction GMP + ATP = GDP + ADP. Its function is as follows. Essential for recycling GMP and indirectly, cGMP. This chain is Guanylate kinase, found in Histophilus somni (strain 129Pt) (Haemophilus somnus).